A 1049-amino-acid chain; its full sequence is Solvent-resistant pump membrane transporter SrpB (1049 aa).

A run of 12 helical transmembrane segments spans residues 10-30, 339-359, 366-386, 392-412, 440-460, 470-490, 542-562, 871-891, 895-915, 927-947, 973-993, and 1008-1028; these read IFAWVLAIVAMLAGALSLAKM, SVVHTIFEAVVLVFLVMYLFL, LIPTLAVPVVLLATFALLPYF, VLTMYAMVLAIGLLVDDAIVV, GALVGIGMVLSAVFVPMAFFG, FAITIVVCMGLSILVALVFTP, LAFLLITGGTGYLFTQIPKAF, APLLYALTVLIVFLCLAALYE, VPVSVIMVVPLGILGAVLATL, VGLMTTVGLSAKNAILIVEFA, ILMTSLAFTFGVLPMAIASGA, and GMITATVLAVFFVPLFYVVVV.

This sequence belongs to the resistance-nodulation-cell division (RND) (TC 2.A.6) family.

Its subcellular location is the cell inner membrane. Its function is as follows. The inner membrane transporter component of an organic solvent efflux pump. Involved in export of a number of low log POW compounds including hexane (log POW 3.5), toluene (log POW 2.5) and dimethylphthalate (log POW 2.3). The solvent resistance phenotype has been postulated to depend on the operon expression level. The chain is Solvent-resistant pump membrane transporter SrpB (srpB) from Pseudomonas putida (Arthrobacter siderocapsulatus).